The sequence spans 344 residues: Glycerol-3-phosphate dehydrogenase [NAD(P)+] (344 aa).

NADPH-binding residues include serine 23, tryptophan 24, arginine 44, and lysine 118. Sn-glycerol 3-phosphate is bound by residues lysine 118, glycine 147, and threonine 149. Residue alanine 151 coordinates NADPH. Sn-glycerol 3-phosphate-binding residues include lysine 202, aspartate 255, serine 265, arginine 266, and asparagine 267. Lysine 202 acts as the Proton acceptor in catalysis. Residue arginine 266 participates in NADPH binding. Residue glutamate 292 coordinates NADPH.

The protein belongs to the NAD-dependent glycerol-3-phosphate dehydrogenase family.

It localises to the cytoplasm. The enzyme catalyses sn-glycerol 3-phosphate + NAD(+) = dihydroxyacetone phosphate + NADH + H(+). It carries out the reaction sn-glycerol 3-phosphate + NADP(+) = dihydroxyacetone phosphate + NADPH + H(+). It functions in the pathway membrane lipid metabolism; glycerophospholipid metabolism. Its function is as follows. Catalyzes the reduction of the glycolytic intermediate dihydroxyacetone phosphate (DHAP) to sn-glycerol 3-phosphate (G3P), the key precursor for phospholipid synthesis. The polypeptide is Glycerol-3-phosphate dehydrogenase [NAD(P)+] (Nitrosococcus oceani (strain ATCC 19707 / BCRC 17464 / JCM 30415 / NCIMB 11848 / C-107)).